A 443-amino-acid chain; its full sequence is Threonine/serine transporter TdcC (443 aa).

11 helical membrane-spanning segments follow: residues 22–42 (TTWT…FFPI), 44–64 (AGFG…PIAF), 97–117 (GVVI…IYGV), 140–160 (FVAL…KDLM), 163–183 (VMSY…LSLI), 207–227 (ILIT…FSPI), 261–281 (MLMV…LSPA), 312–332 (AITL…KSFF), 366–386 (ISMI…PNIL), 389–409 (IEAM…MYAI), and 423–443 (DNVF…YKLF).

This sequence belongs to the amino acid/polyamine transporter 2 family. SdaC/TdcC subfamily.

It is found in the cell inner membrane. It catalyses the reaction L-threonine(in) + H(+)(in) = L-threonine(out) + H(+)(out). The catalysed reaction is L-serine(in) + H(+)(in) = L-serine(out) + H(+)(out). Its function is as follows. Involved in the import of threonine and serine into the cell, with the concomitant import of a proton (symport system). The polypeptide is Threonine/serine transporter TdcC (Escherichia coli O45:K1 (strain S88 / ExPEC)).